A 190-amino-acid polypeptide reads, in one-letter code: Dynactin subunit 6 (190 aa).

Phosphothreonine; by CDK1 is present on T186.

This sequence belongs to the dynactin subunits 5/6 family. Dynactin subunit 6 subfamily. As to quaternary structure, subunit of dynactin, a multiprotein complex part of a tripartite complex with dynein and a adapter, such as BICDL1, BICD2 or HOOK3. The dynactin complex is built around ACTR1A/ACTB filament and consists of an actin-related filament composed of a shoulder domain, a pointed end and a barbed end. Its length is defined by its flexible shoulder domain. The soulder is composed of 2 DCTN1 subunits, 4 DCTN2 and 2 DCTN3. The 4 DCNT2 (via N-terminus) bind the ACTR1A filament and act as molecular rulers to determine the length. The pointed end is important for binding dynein-dynactin cargo adapters. Consists of 4 subunits: ACTR10, DCNT4, DCTN5 and DCTN6. Within the complex DCTN6 forms a heterodimer with DCTN5. The barbed end is composed of a CAPZA1:CAPZB heterodimers, which binds ACTR1A/ACTB filament and dynactin and stabilizes dynactin. Interacts with PLK1. Interacts with N4BP2L1. In terms of processing, phosphorylation at Thr-186 by CDK1 during mitotic prometaphase creates a binding site for PLK1 that facilitates its recruitment to kinetochores.

Its subcellular location is the cytoplasm. It is found in the cytoskeleton. The protein localises to the chromosome. The protein resides in the centromere. It localises to the kinetochore. Functionally, part of the dynactin complex that activates the molecular motor dynein for ultra-processive transport along microtubules. This is Dynactin subunit 6 (DCTN6) from Bos taurus (Bovine).